The primary structure comprises 467 residues: MSDHNPLTLKLNLREKIAYGMGDVGSNLMLCIGTLYLLKFYTDELGMPAYYGGIIFLVAKFFTAFTDMLTGFLLDSRKNIGPKGKFRPFILYAAVPAALIATLQFIATTFCLPVKTTIATALFMMFGLSYSLMNCSYGAMIPAITKNPNERAQLAAYRQGGATIGLLICTVAFIPLQSLFSDSTVGYACAALMFSIGGFIFMMLCYRGVKEHYVDTTPTGHKASILKSFCAIFRNPPLLVLCIANLCTLAAFNIKLAIQVYYTQYVLNDINLLSWMGFFSMGCILIGVLLVPLTVKCFGKKQVYLAGMVLWAVGDILNYFWGSNSFTFVMFSCVAFFGTAFVNSLNWALVPDTVDYGEWKTGIRAEGSVYTGYTFFRKISAALAGFLPGIMLTQIGYVPNIAQSDATLQGLRQLIFIWPCALAIIAALTMGFFYTLNEKRFALIIEEINQRKNKEMATEEKTASVTL.

The next 12 membrane-spanning stretches (helical) occupy residues 17–37 (IAYGMGDVGSNLMLCIGTLYL), 54–74 (IIFLVAKFFTAFTDMLTGFLL), 88–108 (PFILYAAVPAALIATLQFIAT), 121–141 (ALFMMFGLSYSLMNCSYGAMI), 160–180 (GGATIGLLICTVAFIPLQSLF), 185–205 (VGYACAALMFSIGGFIFMMLC), 238–258 (LLVLCIANLCTLAAFNIKLAI), 275–295 (WMGFFSMGCILIGVLLVPLTV), 303–323 (VYLAGMVLWAVGDILNYFWGS), 325–345 (SFTFVMFSCVAFFGTAFVNSL), 379–399 (ISAALAGFLPGIMLTQIGYVP), and 414–434 (LIFIWPCALAIIAALTMGFFY).

This sequence belongs to the sodium:galactoside symporter (TC 2.A.2) family.

The protein resides in the cell inner membrane. Its function is as follows. Could be involved in sulfoquinovose import. This is Putative sulfoquinovose importer (yihO) from Escherichia coli (strain K12).